A 272-amino-acid polypeptide reads, in one-letter code: HMP-PP phosphatase (272 aa).

Aspartate 8 serves as the catalytic Nucleophile. 3 residues coordinate Mg(2+): aspartate 8, aspartate 10, and aspartate 212.

This sequence belongs to the HAD-like hydrolase superfamily. Cof family. Requires Mg(2+) as cofactor.

It carries out the reaction 4-amino-2-methyl-5-(diphosphooxymethyl)pyrimidine + H2O = 4-amino-2-methyl-5-(phosphooxymethyl)pyrimidine + phosphate + H(+). Catalyzes the hydrolysis of 4-amino-2-methyl-5-hydroxymethylpyrimidine pyrophosphate (HMP-PP) to 4-amino-2-methyl-5-hydroxymethylpyrimidine phosphate (HMP-P). In Salmonella schwarzengrund (strain CVM19633), this protein is HMP-PP phosphatase.